Consider the following 362-residue polypeptide: MKYIINNFNLFDLQAKLKNFLSKNYKNKYYKRIKQKIFSYINLCNDYYNGNFLLKDLIKKYFKNKFSTFYYWANKILIAYKSNDFAELLLKSTIPNNINYQYSNDVRQNICDLYFKYCNKHAGGVLSLFYNLKKGIHGEELKNKAPKNLKTFFRWLKKDERWLKIKNKIKEIKKQHSRYEVKEIGLLQMDAKYFVPSKFSVDKKYYVYDFIDEKTRLALGYVYDKLSTDNAIDAVKKAISDFKNIFGIIITRIRTDNGSEFINNYRNNQKISVKKTNFTQFLTDKNILHQTTPVRSPQSNGKIERFHQNYTKLFVFEEKILNAVSLQNKLNDYYYFYNFERVHKSLNFQTPFNFLNSLSLIK.

One can recognise an Integrase catalytic domain in the interval 179 to 359; the sequence is YEVKEIGLLQ…TPFNFLNSLS (181 aa). The Mg(2+) site is built by Asp-190 and Asp-256.

The protein belongs to the plectrovirus integrase ORF3 family.

Functionally, this protein may encode an integrase, which is necessary for integration of the viral DNA into host genome. This chain is Putative integrase ORF3, found in Spiroplasma melliferum (SpV1).